The chain runs to 538 residues: Cytochrome P450 52A4 (538 aa).

The chain crosses the membrane as a helical span at residues 27 to 46 (WYILIPTILLTLNFLSILHT). Residue C485 coordinates heme.

Belongs to the cytochrome P450 family. It depends on heme as a cofactor.

It localises to the membrane. Together with an NADPH cytochrome P450 the enzyme system catalyzes the terminal hydroxylation as the first step in the assimilation of alkanes and fatty acids. The sequence is that of Cytochrome P450 52A4 (CYP52A4) from Candida maltosa (Yeast).